We begin with the raw amino-acid sequence, 415 residues long: Histidine--tRNA ligase (415 aa).

Belongs to the class-II aminoacyl-tRNA synthetase family. As to quaternary structure, homodimer.

It localises to the cytoplasm. The enzyme catalyses tRNA(His) + L-histidine + ATP = L-histidyl-tRNA(His) + AMP + diphosphate + H(+). This Idiomarina loihiensis (strain ATCC BAA-735 / DSM 15497 / L2-TR) protein is Histidine--tRNA ligase.